The following is a 136-amino-acid chain: Protein PsiE (136 aa).

The next 4 membrane-spanning stretches (helical) occupy residues 15–35 (ILQN…VVFL), 55–75 (YELV…ALIV), 83–103 (HFPL…LIIV), and 108–128 (PMDV…LWLC).

This sequence belongs to the PsiE family.

Its subcellular location is the cell inner membrane. The protein is Protein PsiE of Salmonella agona (strain SL483).